The sequence spans 388 residues: Chorismate synthase (388 aa).

Residues Arg39 and Arg45 each contribute to the NADP(+) site. The disordered stretch occupies residues 95–118; the sequence is EKNEKSRRVSRPRPGHADLVGGMK. Residues 130-132, 251-252, Gly296, 311-315, and Arg337 each bind FMN; these read RSS, NA, and KPIPT.

Belongs to the chorismate synthase family. As to quaternary structure, homotetramer. FMNH2 is required as a cofactor.

The catalysed reaction is 5-O-(1-carboxyvinyl)-3-phosphoshikimate = chorismate + phosphate. Its pathway is metabolic intermediate biosynthesis; chorismate biosynthesis; chorismate from D-erythrose 4-phosphate and phosphoenolpyruvate: step 7/7. In terms of biological role, catalyzes the anti-1,4-elimination of the C-3 phosphate and the C-6 proR hydrogen from 5-enolpyruvylshikimate-3-phosphate (EPSP) to yield chorismate, which is the branch point compound that serves as the starting substrate for the three terminal pathways of aromatic amino acid biosynthesis. This reaction introduces a second double bond into the aromatic ring system. The polypeptide is Chorismate synthase (Listeria welshimeri serovar 6b (strain ATCC 35897 / DSM 20650 / CCUG 15529 / CIP 8149 / NCTC 11857 / SLCC 5334 / V8)).